The primary structure comprises 282 residues: Acetyl-coenzyme A carboxylase carboxyl transferase subunit beta (282 aa).

Residues 25–282 (LWTKCVSCGE…SSILTMLYRP (258 aa)) enclose the CoA carboxyltransferase N-terminal domain. The Zn(2+) site is built by Cys-29, Cys-32, Cys-48, and Cys-51. Residues 29 to 51 (CVSCGETIYTKDIENNLNVCPKC) form a C4-type zinc finger.

Belongs to the AccD/PCCB family. As to quaternary structure, acetyl-CoA carboxylase is a heterohexamer composed of biotin carboxyl carrier protein (AccB), biotin carboxylase (AccC) and two subunits each of ACCase subunit alpha (AccA) and ACCase subunit beta (AccD). It depends on Zn(2+) as a cofactor.

It is found in the cytoplasm. The catalysed reaction is N(6)-carboxybiotinyl-L-lysyl-[protein] + acetyl-CoA = N(6)-biotinyl-L-lysyl-[protein] + malonyl-CoA. The protein operates within lipid metabolism; malonyl-CoA biosynthesis; malonyl-CoA from acetyl-CoA: step 1/1. In terms of biological role, component of the acetyl coenzyme A carboxylase (ACC) complex. Biotin carboxylase (BC) catalyzes the carboxylation of biotin on its carrier protein (BCCP) and then the CO(2) group is transferred by the transcarboxylase to acetyl-CoA to form malonyl-CoA. The protein is Acetyl-coenzyme A carboxylase carboxyl transferase subunit beta of Citrifermentans bemidjiense (strain ATCC BAA-1014 / DSM 16622 / JCM 12645 / Bem) (Geobacter bemidjiensis).